A 505-amino-acid chain; its full sequence is Midnolin (505 aa).

In terms of domain architecture, Ubiquitin-like spans 32-106 (MSLAIHSTTG…LTLVPTVEAG (75 aa)). 3 disordered regions span residues 155 to 176 (PWHRQGPQSPERGGERPQVSDF), 228 to 305 (SIAT…SRKP), and 440 to 485 (RLRR…GLDF). The segment covering 238-262 (RPVSSAARVPPVSSSPSSPVSPSPV) has biased composition (low complexity). A compositionally biased stretch (polar residues) spans 263 to 282 (TAGTFQSHAASTTCPEQTDC). Residues 283-300 (SPPASSNTTSTPGSSPTP) are compositionally biased toward low complexity.

As to quaternary structure, interacts with GCK; the interaction occurs preferentially at low glucose levels. Interacts with the proteasome.

Its subcellular location is the nucleus. The protein localises to the cytoplasm. It localises to the cytosol. The protein resides in the nucleolus. In terms of biological role, facilitates the ubiquitin-independent proteasomal degradation of stimulus-induced transcription factors such as FOSB, EGR1, NR4A1, and IRF4 to the proteasome for degradation. Promotes also the degradation of other substrates such as CBX4. Plays a role in inhibiting the activity of glucokinase GCK and both glucose-induced and basal insulin secretion. This is Midnolin from Rattus norvegicus (Rat).